The sequence spans 2292 residues: MKRHQFKSWIFELREIKNSHYFLDSWTKFDSVGSFTHIFFHQERFMKLFDPRIWSILLSRDSQGSTSNRYFTIKGVVLLVVAVLIYRINNRNMVERKNLYLMGLLPIPILPIPMNSIGPRNDTLEESFWSSNINRLIVSLLYLPKGKKISESCFMDPKESTWVLPITKKCIMPESNWGSRWWRNRIGKKRDSSCKISNETVAGIEISFKEKDIKYLEFLFVSYTDDPIRKDLDWEFFDRLSPRKKRNIINLNSGQLFEILVKHLICYLMSAFREKRPIEVEGFFKQQGAEATIQSNDIEHVSHLFSRNKWGISLQNCAQFHMWQFRQDLFVSWGKNQHESDFLRNVSRENWIWLDNVWLVNKDWFFSKVRNVSSNIQYDSTRSIFVQVTDSSQLKGSSDQSRDPFDSISNEDSEYHTLINQTEIQQLKERSILWDPSFLQTERTEIESDRFPKCLSGYSSMSRLFTEREKQMNNHLLPEEIEEFLGNPTRSIRSFFSDRWSELHLGSNPTERSTRDQKLLKKQQDVSFVPSRRSENKEMVDIFKIITYLQNTVSIHPISSDPGCDMVPKDEPDMGSSNKISFLNKNPFLDLFHLFHDRNKGGYTLHHDFESEERFQEMADLFTLSITEPDLVYHKGFAFSIDSYGLDQKKFLNEVFNSRDESKKKSLWVLPPIFDEENESFYRRIRKKSVRISCGNDLEDPKPKIVVFASNNIMEAVNQYRLIRNLIQIQYSTYGYIRNVSNRFFLMNRSDRNFEYGIQRDQIGNDTLNHLTRIKYTINQHLSNLKKSQKKWFDPLISRTERSMNRDPDAYRYKWSNGSKNFQEHLEHFVSEQKHRFQVVFDRLRINQYSIDWSEVIDKQDLSKSLRFFLSKSLLFLSKSLLFLSKSLPFFFVSIGNIPIHRSEIHIYELKVPNDQLCNQLLESIGVQIVHLNKLKPFLLDDHDTSQRSKFLINGGTISPFLFNKIPKWMIDSFHTRNNRRKSFDNTDSYFSMISRDRDNWLNPVKPFHRSSLISSFYKANRLRFLNNPHHFWFYCNKRFPFYVEKTRINNYDLTYGQFLNILFIRNKIFSLCVGKKKHVFLERDTISPIESQVSDIFIPNDFPQSGGETYNLYKSFHFPIRSDPFVRRAIYSIADISGTPLTEEQIVNFERTYCQPLSDMNLSDSEGKNLHQYLSFNSNMGLIHTPCSEKDLPSGKRKKRSLCLKKCVEKRQMYRTFQRDSAFSNLSKWNLFQTYMPWFLTSTGCKYLNFTLLDTFSDPLPILSSSQKFVSIFHDIMHGSDISWPIPQKKLWAILPQWNLISEISSKCLQNLLLSEEMIHRNNESPVPLIWTHLRSPNAREFLYSILFLLLVAGYLVRTHLLFVSRASSELQTELEKIKSLMIPSYMIELRKLLDRYPTSELNSFWLKNLFLVALEQLGDSLEEIRGSASGGNMLLGGGPAYGVKSIRSKKKYLNINLIDLISIIPNPINRITFSRNTRHLSRTSKEIYSLIRKRKNVNGDWIDDKIESWVANSDSIDDEEREFLVQFSTLTTEKRIDQILLSLTHSDHLSKNDSGYQMIEQPGSIYLRYLVDIHKKYLMNYEFNRSCLAERRIFLAHYQTITYSQTSCGANSSHFPSHGKPFSLRLALSPSRGILVIGSIGIGRSYLVKYLATNSYVPFITVFPNKFLDDKPKGYLIDDIDIDDSDDIDIDDSDDIDDDLDTELLTMTNVLTMYMTPKIDRFDITPQLELAKAMSPCIIWIPNIHDLYVNESNYLSLGLLVNYLSRDCERCSTRNILVIASTHIPKKVDPALIAPNKLNTCIKIRRLLIPQQRKHFFILSYTRGFHLEKKMFHTNGFGSMTMGSNARDLVALTNEALSISITQKKSIIDTNTIRSALHRQTWDLRSQVRSVQDHGILFYQIGRAVAQNVLLSNCPIDPISIYMKKKSCKEGDSYLYKWYFELGTSMKKLTILLYLLSCSAGSVAQDLWSPPGPDEKNGITSYGFVENDSDLVHGLLEVEGALVGSSRTEKDCSQFDNDRVTLLLRSEPRNQLDMMQNGSCSIVDQRFLYEKYESEFEGGEGEGALDPQQIEEDLFNHIVWAPRIWRPCGNLFDCIERTNELGFPYWARSFRGKRIIYHKEDELQENDSEFLQSGTMQYQTRDRSSKEQGFFRISQFVWDPADPFFFLFKDQPFVSVFSRREFFADEEMSKGLITSQTNPPTSIYKRWFIKNTQEKHFELLIHRQRWLRTNSSLSNGSFRSNTPSESYQYLSNLFLSNGTLLDQMTKALLRKRWLFPDEMKHLIHVRFPIP.

1640–1647 (GSIGIGRS) is an ATP binding site.

The protein belongs to the Ycf2 family.

It localises to the plastid. The protein resides in the chloroplast stroma. Functionally, probable ATPase of unknown function. Its presence in a non-photosynthetic plant (Epifagus virginiana) and experiments in tobacco indicate that it has an essential function which is probably not related to photosynthesis. This is Protein Ycf2 from Liriodendron tulipifera (Tuliptree).